Here is a 329-residue protein sequence, read N- to C-terminus: Alpha/beta hydrolase domain-containing protein 17C (329 aa).

A compositionally biased stretch (low complexity) spans 53 to 79 (GASAPAPAQATAAAAAAQPAPQQPEEG). The segment at 53–85 (GASAPAPAQATAAAAAAQPAPQQPEEGAGAGPG) is disordered. Active-site charge relay system residues include S211, D276, and H305.

The protein belongs to the AB hydrolase superfamily. ABHD17 family. In terms of processing, palmitoylated on cysteine residues located in a cysteine cluster at the N-terminus which promotes membrane localization. Palmitoylation is required for post-synaptic localization and for depalmitoylating activity towards DLG4/PSD95.

The protein resides in the recycling endosome membrane. It is found in the cell projection. Its subcellular location is the dendritic spine. It localises to the postsynaptic density membrane. It carries out the reaction S-hexadecanoyl-L-cysteinyl-[protein] + H2O = L-cysteinyl-[protein] + hexadecanoate + H(+). Its activity is regulated as follows. Inhibited by palmostatin-B. In terms of biological role, hydrolyzes fatty acids from S-acylated cysteine residues in proteins. Has depalmitoylating activity towards NRAS and DLG4/PSD95. The chain is Alpha/beta hydrolase domain-containing protein 17C from Homo sapiens (Human).